The sequence spans 454 residues: Photosystem II CP47 reaction center protein (454 aa).

The next 6 membrane-spanning stretches (helical) occupy residues 6 to 26 (MFVL…GWTI), 47 to 61 (IILS…IWHW), 86 to 102 (GIHL…FGAF), 149 to 164 (IAAG…FHLS), 183 to 198 (VLSS…AFVV), and 403 to 418 (SFAL…HGAR).

This sequence belongs to the PsbB/PsbC family. PsbB subfamily. In terms of assembly, PSII is composed of 1 copy each of membrane proteins PsbA, PsbB, PsbC, PsbD, PsbE, PsbF, PsbH, PsbI, PsbJ, PsbK, PsbL, PsbM, PsbT, PsbX, PsbY, PsbZ, Psb30/Ycf12, at least 3 peripheral proteins of the oxygen-evolving complex and a large number of cofactors. It forms dimeric complexes. Binds multiple chlorophylls. PSII binds additional chlorophylls, carotenoids and specific lipids. is required as a cofactor.

The protein localises to the plastid. The protein resides in the chloroplast thylakoid membrane. Its function is as follows. One of the components of the core complex of photosystem II (PSII). It binds chlorophyll and helps catalyze the primary light-induced photochemical processes of PSII. PSII is a light-driven water:plastoquinone oxidoreductase, using light energy to abstract electrons from H(2)O, generating O(2) and a proton gradient subsequently used for ATP formation. This Ostreococcus tauri protein is Photosystem II CP47 reaction center protein.